A 145-amino-acid chain; its full sequence is Male-specific protein scotti (145 aa).

The disordered stretch occupies residues 1–34; that stretch reads MANNRLMPEGQIIEEDMDGEDQNARELDIDDDDD. A compositionally biased stretch (acidic residues) spans 12-21; it reads IIEEDMDGED.

The protein belongs to the male-specific scotti family.

Post-meiotically transcribed gene that has a role in late spermiogenesis; required for actin cone progression during spermatid individualization. In Drosophila willistoni (Fruit fly), this protein is Male-specific protein scotti.